The chain runs to 103 residues: Small ribosomal subunit protein uS10 (103 aa).

This sequence belongs to the universal ribosomal protein uS10 family. As to quaternary structure, part of the 30S ribosomal subunit.

In terms of biological role, involved in the binding of tRNA to the ribosomes. The protein is Small ribosomal subunit protein uS10 of Borreliella burgdorferi (strain ATCC 35210 / DSM 4680 / CIP 102532 / B31) (Borrelia burgdorferi).